We begin with the raw amino-acid sequence, 100 residues long: NADH-quinone oxidoreductase subunit K 1 (100 aa).

Helical transmembrane passes span 4–24, 29–49, and 60–80; these read LNNY…GVLV, IVIF…FIAF, and IFVF…LALM.

It belongs to the complex I subunit 4L family. NDH-1 is composed of 14 different subunits. Subunits NuoA, H, J, K, L, M, N constitute the membrane sector of the complex.

The protein localises to the cell inner membrane. The catalysed reaction is a quinone + NADH + 5 H(+)(in) = a quinol + NAD(+) + 4 H(+)(out). Its function is as follows. NDH-1 shuttles electrons from NADH, via FMN and iron-sulfur (Fe-S) centers, to quinones in the respiratory chain. The immediate electron acceptor for the enzyme in this species is believed to be ubiquinone. Couples the redox reaction to proton translocation (for every two electrons transferred, four hydrogen ions are translocated across the cytoplasmic membrane), and thus conserves the redox energy in a proton gradient. This is NADH-quinone oxidoreductase subunit K 1 from Geotalea daltonii (strain DSM 22248 / JCM 15807 / FRC-32) (Geobacter daltonii).